We begin with the raw amino-acid sequence, 250 residues long: UPF0758 protein RPB_0700 (250 aa).

The tract at residues 1 to 27 is disordered; the sequence is MVDPISNAAPPMPADSSERLDPPGFAE. Residues 128–250 enclose the MPN domain; the sequence is VLSSWSAVID…HASLKGLKLF (123 aa). His-199, His-201, and Asp-212 together coordinate Zn(2+). The JAMM motif motif lies at 199 to 212; that stretch reads HNHPSGDPTPSQAD.

This sequence belongs to the UPF0758 family.

The sequence is that of UPF0758 protein RPB_0700 from Rhodopseudomonas palustris (strain HaA2).